Reading from the N-terminus, the 251-residue chain is L-xylulose reductase (251 aa).

13–42 (LVTGASQGIGKEICLSLAKAGAQVIAFARN) contributes to the NADP(+) binding site. Residue serine 143 coordinates substrate. The active-site Proton acceptor is the tyrosine 156. An NADP(+)-binding site is contributed by lysine 160.

This sequence belongs to the short-chain dehydrogenases/reductases (SDR) family. Homotetramer. In terms of tissue distribution, expressed in intestine, gonad and spermatids (at protein level). Expressed in intestine, uterine seam, gonadal sheath cells, spermathecal-uterus valve and spermatids.

It localises to the cell membrane. The enzyme catalyses xylitol + NADP(+) = L-xylulose + NADPH + H(+). Strongly inhibited by 10% dimethyl sulfoxide. In terms of biological role, catalyzes the NADPH-dependent reduction of L-xylulose, D-xylulose, L-(+) erythrulose, D-erythrose, D-threose, L-ribulose, 1,4-dibromo-2,3-butanedione and 2,3-heptanedione. Also active against isatin, 9,10-phenanthrenequinone, menadione, 2,3-hexaenadione and 3,4-hexahenadione. No activity observed when tested using NADH rather than NADPH. In Caenorhabditis elegans, this protein is L-xylulose reductase.